A 457-amino-acid polypeptide reads, in one-letter code: Multidrug resistance protein MdtK (457 aa).

Helical transmembrane passes span 11-31 (LLALAIPVILAQIAQTAMGFV), 53-73 (IWLPAILFGHGLLLALTPVIA), 93-113 (WLAGFVSVLIMLVLWNAGYII), 127-147 (AVGYLRALLWGAPGYLFFQVA), 160-180 (GMVMGFIGLLVNIPVNYIFIY), 189-209 (GGVGCGVATAAVYWVMFLAMV), 243-263 (LPIALALFFEVTLFAVVALLV), 276-296 (IALNFSSLMFVLPMSLAAAVT), 314-334 (AARTGLMVGVCMATLTAIFTV), 350-370 (VVTLAAHLMLLAAVYQISDSI), 387-407 (IFYITFTAYWVLGLPSGYILA), and 418-438 (PAGFWIGFIIGLTSAAIMMML).

Belongs to the multi antimicrobial extrusion (MATE) (TC 2.A.66.1) family. MdtK subfamily.

It is found in the cell inner membrane. Functionally, multidrug efflux pump that functions probably as a Na(+)/drug antiporter. The polypeptide is Multidrug resistance protein MdtK (Escherichia coli O139:H28 (strain E24377A / ETEC)).